The sequence spans 399 residues: Probable aspartate/prephenate aminotransferase (399 aa).

L-aspartate-binding residues include Gly39, Trp125, and Asn175. Lys239 is subject to N6-(pyridoxal phosphate)lysine. Position 375 (Arg375) interacts with L-aspartate.

The protein belongs to the class-I pyridoxal-phosphate-dependent aminotransferase family. As to quaternary structure, homodimer. The cofactor is pyridoxal 5'-phosphate.

The protein resides in the cytoplasm. The enzyme catalyses L-aspartate + 2-oxoglutarate = oxaloacetate + L-glutamate. It carries out the reaction L-arogenate + 2-oxoglutarate = prephenate + L-glutamate. Catalyzes the reversible conversion of aspartate and 2-oxoglutarate to glutamate and oxaloacetate. Can also transaminate prephenate in the presence of glutamate. In Rickettsia bellii (strain RML369-C), this protein is Probable aspartate/prephenate aminotransferase (aatA).